Here is a 700-residue protein sequence, read N- to C-terminus: Elongation factor G (700 aa).

The tr-type G domain occupies 8 to 290; that stretch reads SLYRNIGISA…AVIDYLPAPT (283 aa). GTP is bound by residues 17–24, 88–92, and 142–145; these read AHIDAGKT, DTPGH, and NKMD.

Belongs to the TRAFAC class translation factor GTPase superfamily. Classic translation factor GTPase family. EF-G/EF-2 subfamily.

The protein resides in the cytoplasm. Functionally, catalyzes the GTP-dependent ribosomal translocation step during translation elongation. During this step, the ribosome changes from the pre-translocational (PRE) to the post-translocational (POST) state as the newly formed A-site-bound peptidyl-tRNA and P-site-bound deacylated tRNA move to the P and E sites, respectively. Catalyzes the coordinated movement of the two tRNA molecules, the mRNA and conformational changes in the ribosome. The chain is Elongation factor G from Histophilus somni (strain 129Pt) (Haemophilus somnus).